The following is a 534-amino-acid chain: tRNA uridine(34) acetyltransferase (534 aa).

Positions 70–330 (KPVRTISGVA…GEFKPYREEE (261 aa)) are radical S-adenosyl-L-methionine (rSAM). In terms of domain architecture, Radical SAM core spans 73–344 (RTISGVAVVA…ISYAKSIMPK (272 aa)). [4Fe-4S] cluster contacts are provided by C90, C95, and C98. An acetyl-CoA-binding site is contributed by K150. The cysteines at positions 384 and 389 are disulfide-linked. One can recognise an N-acetyltransferase domain in the interval 387 to 534 (IRCREVGHVY…RVGAYMGKEL (148 aa)). Acetyl-CoA is bound by residues 461–464 (QLHV), 485–487 (YGR), and Y518.

Belongs to the ELP3 family. Requires [4Fe-4S] cluster as cofactor.

It catalyses the reaction uridine(34) in tRNA + acetyl-CoA + S-adenosyl-L-methionine + H2O = 5-(carboxymethyl)uridine(34) in tRNA + 5'-deoxyadenosine + L-methionine + CoA + 2 H(+). Its pathway is tRNA modification. TRNA uridine(34) acetyltransferase, which mediates formation of carboxymethyluridine in the wobble base at position 34 in tRNAs. The proposed mechanism is the following: (i) recruits S-adenosyl-L-methionine and cleaves it to generate a 5'-deoxyadenosine radical (5'-dA) in the radical S-adenosyl-L-methionine (rSAM) region, (ii) hydrolyzes acetyl-CoA in the N-acetyltransferase domain and (iii) an acetyl radical is formed by the products of the two domains and (iv) is transferred onto the C5 position of uridine(34) in the bound tRNA molecule. Does not show protein lysine acetyltransferase activity. In Methanocaldococcus infernus (strain DSM 11812 / JCM 15783 / ME), this protein is tRNA uridine(34) acetyltransferase.